A 354-amino-acid chain; its full sequence is 4-hydroxy-3-methylbut-2-en-1-yl diphosphate synthase (flavodoxin) (354 aa).

[4Fe-4S] cluster is bound by residues Cys262, Cys265, Cys297, and Glu304.

The protein belongs to the IspG family. Requires [4Fe-4S] cluster as cofactor.

The enzyme catalyses (2E)-4-hydroxy-3-methylbut-2-enyl diphosphate + oxidized [flavodoxin] + H2O + 2 H(+) = 2-C-methyl-D-erythritol 2,4-cyclic diphosphate + reduced [flavodoxin]. Its pathway is isoprenoid biosynthesis; isopentenyl diphosphate biosynthesis via DXP pathway; isopentenyl diphosphate from 1-deoxy-D-xylulose 5-phosphate: step 5/6. Its function is as follows. Converts 2C-methyl-D-erythritol 2,4-cyclodiphosphate (ME-2,4cPP) into 1-hydroxy-2-methyl-2-(E)-butenyl 4-diphosphate. The protein is 4-hydroxy-3-methylbut-2-en-1-yl diphosphate synthase (flavodoxin) of Helicobacter hepaticus (strain ATCC 51449 / 3B1).